Consider the following 964-residue polypeptide: Fanconi-associated nuclease 1 homolog (964 aa).

Positions 31-56 (SRSLQDDAADAEREAAAGGSSSGGGD) are disordered. Residues 63–92 (WVACPVCGESIRGTDYCVNTHLDICLTRGT) form a UBZ4-type zinc finger. 4 residues coordinate Zn(2+): cysteine 66, cysteine 69, histidine 83, and cysteine 87. Residues glutamate 786, aspartate 907, glutamate 926, and valine 927 each coordinate Mn(2+). One can recognise a VRR-NUC domain in the interval 844-958 (GIAEEILISS…GFDVEVCKVS (115 aa)).

Belongs to the FAN1 family. Mn(2+) serves as cofactor. It depends on Mg(2+) as a cofactor.

The enzyme catalyses Hydrolytically removes 5'-nucleotides successively from the 3'-hydroxy termini of 3'-hydroxy-terminated oligonucleotides.. In terms of biological role, nuclease required for the repair of DNA interstrand cross-links (ICL). Acts as a 5'-3' exonuclease that anchors at a cut end of DNA and cleaves DNA successively at every third nucleotide, allowing to excise an ICL from one strand through flanking incisions. This chain is Fanconi-associated nuclease 1 homolog, found in Oryza sativa subsp. japonica (Rice).